The primary structure comprises 796 residues: Inactive dipeptidyl peptidase 10 (796 aa).

Residues 1-34 (MNQTASVSHHIKCQPSKTIKELGSNSPPQRNWKG) are Cytoplasmic-facing. Residues 1–56 (MNQTASVSHHIKCQPSKTIKELGSNSPPQRNWKGIAIALLVILVVCSLITMSVILL) are mediates effects on KCND2. Residues 35 to 55 (IAIALLVILVVCSLITMSVIL) form a helical; Signal-anchor for type II membrane protein membrane-spanning segment. Residues 56 to 796 (LTPDELTNSS…VLPQEPEEDE (741 aa)) lie on the Extracellular side of the membrane. Residues Asn90, Asn111, and Asn119 are each glycosylated (N-linked (GlcNAc...) asparagine). Phosphotyrosine is present on residues Tyr138 and Tyr143. Residues Asn257, Asn342, and Asn748 are each glycosylated (N-linked (GlcNAc...) asparagine).

This sequence belongs to the peptidase S9B family. DPPIV subfamily. As to quaternary structure, may form oligomers. Interacts with KCND1. Interacts with KCND2. N-glycosylation is important for cell surface expression, specially at Asn-257, which is crucial. Found in serum, T-cells and brain (at protein level). Expressed in brain, pancreas, spinal cord and adrenal glands.

The protein resides in the cell membrane. Functionally, promotes cell surface expression of the potassium channel KCND2. Modulates the activity and gating characteristics of the potassium channel KCND2. Has no dipeptidyl aminopeptidase activity. The sequence is that of Inactive dipeptidyl peptidase 10 (DPP10) from Homo sapiens (Human).